The primary structure comprises 506 residues: Probable alpha-L-arabinofuranosidase B (506 aa).

The signal sequence occupies residues 1–26 (MLPQLSIERASVFALGLIATGSLVVA). Residues 27–343 (GPCDIYSAGG…ANIVAAKYAT (317 aa)) are catalytic. 3 disulfides stabilise this stretch: Cys29–Cys39, Cys89–Cys94, and Cys184–Cys185. Asp227 lines the substrate pocket. The active-site Nucleophile is Glu229. Asn230 lines the substrate pocket. Asn240 is a glycosylation site (N-linked (GlcNAc...) asparagine). Gly304 contacts substrate. The Proton donor role is filled by Asp305. The segment at 344 to 506 (ASLTSGPKLT…VSWVISTGFA (163 aa)) is ABD. The cysteines at positions 409 and 447 are disulfide-linked. 7 residues coordinate substrate: His424, Asn426, Phe427, Asp443, His471, Leu476, and Asp496.

The protein belongs to the glycosyl hydrolase 54 family.

The protein resides in the secreted. The catalysed reaction is Hydrolysis of terminal non-reducing alpha-L-arabinofuranoside residues in alpha-L-arabinosides.. The protein operates within glycan metabolism; L-arabinan degradation. Alpha-L-arabinofuranosidase involved in the degradation of arabinoxylan, a major component of plant hemicellulose. Able to hydrolyze 1,5-, 1,3- and 1,2-alpha-linkages not only in L-arabinofuranosyl oligosaccharides, but also in polysaccharides containing terminal non-reducing L-arabinofuranoses in side chains, like L-arabinan, arabinogalactan and arabinoxylan. The sequence is that of Probable alpha-L-arabinofuranosidase B (abfB) from Aspergillus fumigatus (strain ATCC MYA-4609 / CBS 101355 / FGSC A1100 / Af293) (Neosartorya fumigata).